The primary structure comprises 64 residues: Small ribosomal subunit protein bS21 (64 aa).

The tract at residues P40–F64 is disordered. Residues R55–F64 are compositionally biased toward basic residues.

This sequence belongs to the bacterial ribosomal protein bS21 family.

The polypeptide is Small ribosomal subunit protein bS21 (Elusimicrobium minutum (strain Pei191)).